The following is an 879-amino-acid chain: MGSLPQLSIVKGLQQDFVPRALHRIFEEQQLRHADKVALIYQPSTTGQGMAPSQSSYRQMNERANRAARLLVAETHGRFLQPNSDGDFIVAVCMQPSEGLVTTLLAIWKAGGAYLPIDPSFPANRIHHILLEAKPTLVIRDDDIDAGRFQGTPTLSTTELYAKSLQLAGSNLLSEEMLRGGNDHIAIVLYTSGSTGVPKGVRLPHESILNRLQWQWATFPYTANEAVSVFKTALTFVDSIAELWGPLMCGLAILVVPKAVTKDPQRLVALLERYKIRRLVLVPTLLRSLLMYLKMEGGGAAQKLLYNLQIWVCSGEPLSVSLASSFFDYFDEGVHRLYNFYGSTEVLGDVTYFACESKKQLSLYDNVPIGIPLSNTVVYLLDADYRPVKNGEIGEIFASGLNLAAGYVNGRDPERFLENPLAVEKKYARLYRTGDYGSLKNGSIMYEGRTDSQVKIRGHRVDLSEVEKNVAELPLVDKAIVLCYHAGQVDQAILAFVKLRDDAPMVTEMQMEARLKDKLADYMTPQVVILEHVPLLVNGKVDRQALLKTYETANNNEGDSSIVLDFDYSQVPEDLKLTARDLFETVGGVIGRSTRATLAPHSNFYELGGNSLNSIFTVTLLREKGYNIGISEFIAAKNLGEIIEKMAANHDAVQLEEESLNACPHLKMEAVPLRLEHRQEVIDIIVASFYNKADLEQWLKPGVLRTDYSDILNDIWNVLVERDLSFVVYDTNTDRIIGTALNFDARNEPEVDIKSKLLIVFEFLEFCEGPIRDNYLPKGLNQILHSFMMGTAEKLNPRENIACMHFMEHEVLRVAREKQFAGIFTTNTSPLTQQLADVYHYKTLLNFQVNEYVHSDGSRPFGDAPDEQRAIVHWKEVGK.

Residues 26 to 540 form an adenylation region; the sequence is FEEQQLRHAD…EHVPLLVNGK (515 aa). The region spanning 573-650 is the Carrier domain; sequence EDLKLTARDL…EIIEKMAANH (78 aa). Residue Ser-611 is modified to O-(pantetheine 4'-phosphoryl)serine. The tract at residues 666–679 is condensation; it reads LKMEAVPLRLEHRQ. Glu-696 contributes to the dopamine binding site. Glu-696 contacts histamine. Thr-825 and Asn-827 together coordinate beta-alanine.

Belongs to the NRP synthetase family. The cofactor is pantetheine 4'-phosphate. Requires Mg(2+) as cofactor. As to expression, expressed in the optic neuropils in the lamina and in distinct cells at the distal border of the medulla cortex (at protein level). Expressed in the protocerebrum and thoracic ganglia (at protein level). Expressed in antennal lobes, antennal nerves and subesophagic ganglion (at protein level). Specifically, expressed in epithelial glial cells of the medulla that surround the synaptic cleft of photoreceptor axonal endings (at protein level). Expressed in some cells in the cuticle.

It is found in the cytoplasm. The catalysed reaction is histamine + beta-alanine + ATP = carcinine + AMP + diphosphate + H(+). It carries out the reaction beta-alanine + ATP + H(+) = beta-alanyl-5'-AMP + diphosphate. It catalyses the reaction beta-alanyl-5'-AMP + holo-[peptidyl-carrier protein] = beta-alanyl-[peptidyl-carrier protein] + AMP + H(+). The enzyme catalyses beta-alanyl-[peptidyl-carrier protein] + histamine = carcinine + holo-[peptidyl-carrier protein] + H(+). The catalysed reaction is dopamine + beta-alanine + ATP = beta-alanyl-dopamine + AMP + diphosphate + H(+). It carries out the reaction beta-alanyl-[peptidyl-carrier protein] + dopamine = beta-alanyl-dopamine + holo-[peptidyl-carrier protein] + H(+). Nonribosomal peptide synthase which is required for the regulation of histamine and dopamine levels in various tissues through their condensation with beta-alanine. In epithelial glial cells, plays an essential role in the inactivation of histamine, the main neurotransmitter in the optical nerve system, by catalyzing the conversion of histamine into carcinine. In the cuticle, catalyzes the condensation of beta-alanine with dopamine to form beta-alanyl-dopamine (NBAD), a metabolite involved in the pigmentation and sclerotization of the insect cuticle. Also, regulates the cuticular hydrocarbon composition in females. Acts downstream of the body clock to regulate circadian behavioral rhythms. Can also condense beta-alanine with biogenic amines tyramine, octopamine, and serotonin in vitro. This Drosophila melanogaster (Fruit fly) protein is Beta-alanyl-bioamine nonribosomal peptide synthetase ebony.